A 295-amino-acid chain; its full sequence is Indole-3-glycerol phosphate synthase (295 aa).

This sequence belongs to the TrpC family.

The enzyme catalyses 1-(2-carboxyphenylamino)-1-deoxy-D-ribulose 5-phosphate + H(+) = (1S,2R)-1-C-(indol-3-yl)glycerol 3-phosphate + CO2 + H2O. Its pathway is amino-acid biosynthesis; L-tryptophan biosynthesis; L-tryptophan from chorismate: step 4/5. The sequence is that of Indole-3-glycerol phosphate synthase from Prochlorococcus marinus (strain MIT 9515).